The following is a 381-amino-acid chain: Protein COS8 (381 aa).

The Extracellular portion of the chain corresponds to 1 to 42; sequence MKENEVKDEKSVDVLSFKQLEFQKTVLPQDVFRNELTWFCYE. Residues 43–63 form a helical membrane-spanning segment; sequence IYKSLAFRIWMLLWLPLSVWW. Topologically, residues 64–72 are cytoplasmic; sequence KLSSNWIHP. Residues 73–93 traverse the membrane as a helical segment; that stretch reads LIVSLLVLFLGPFFVLVICGL. Over 94 to 237 the chain is Extracellular; sequence SRKRSLSKQL…WILKRIFNLR (144 aa). A helical transmembrane segment spans residues 238 to 258; it reads CLPLFLYYFLIVYTSGNADLI. Residues 259 to 381 are Cytoplasmic-facing; the sequence is SRFLFPVVMF…QSARNEKPLK (123 aa).

It belongs to the DUP/COS family.

It is found in the membrane. The protein is Protein COS8 (COS8) of Saccharomyces cerevisiae (strain ATCC 204508 / S288c) (Baker's yeast).